A 168-amino-acid polypeptide reads, in one-letter code: Photosystem I assembly protein Ycf3 (168 aa).

TPR repeat units lie at residues 35 to 68 (AFTY…EIDP), 72 to 105 (SYIL…NPFL), and 120 to 153 (GEQA…TPGN).

Belongs to the Ycf3 family.

It localises to the plastid. The protein resides in the chloroplast thylakoid membrane. In terms of biological role, essential for the assembly of the photosystem I (PSI) complex. May act as a chaperone-like factor to guide the assembly of the PSI subunits. This Solanum tuberosum (Potato) protein is Photosystem I assembly protein Ycf3.